The following is a 96-amino-acid chain: Large ribosomal subunit protein uL23cz (96 aa).

This sequence belongs to the universal ribosomal protein uL23 family. Part of the 50S ribosomal subunit.

It is found in the plastid. Its subcellular location is the chloroplast. In terms of biological role, binds to 23S rRNA. This chain is Large ribosomal subunit protein uL23cz (rpl23-A), found in Sorghum bicolor (Sorghum).